Reading from the N-terminus, the 144-residue chain is DNA polymerase III subunit chi (144 aa).

It belongs to the DNA polymerase III chi/HolC chain family. As to quaternary structure, DNA polymerase III contains a core (composed of alpha, epsilon and theta chains) that associates with a tau subunit. This core dimerizes to form the POLIII' complex. PolIII' associates with the gamma complex (composed of gamma, delta, delta', psi and chi chains) and with the beta chain to form the complete DNA polymerase III complex. Interacts directly with the psi subunit (holD). The only subunit of the DNA polymerase III holoenzyme known to interact with single-stranded DNA binding protein (SSB), interacts directly with DNA helicase YoaA.

The catalysed reaction is DNA(n) + a 2'-deoxyribonucleoside 5'-triphosphate = DNA(n+1) + diphosphate. Its function is as follows. Part of the beta sliding clamp loading complex, which hydrolyzes ATP to load the beta clamp onto primed DNA to form the DNA replication pre-initiation complex. DNA polymerase III is a complex, multichain enzyme responsible for most of the replicative synthesis in bacteria. This DNA polymerase also exhibits 3' to 5' exonuclease activity. This subunit may stabilize YoaA and/or stimulate the helicase activity of YoaA. In Haemophilus influenzae (strain ATCC 51907 / DSM 11121 / KW20 / Rd), this protein is DNA polymerase III subunit chi (holC).